The sequence spans 124 residues: Holo-[acyl-carrier-protein] synthase (124 aa).

Residues Asp7 and Glu55 each coordinate Mg(2+).

Belongs to the P-Pant transferase superfamily. AcpS family. Mg(2+) is required as a cofactor.

Its subcellular location is the cytoplasm. The enzyme catalyses apo-[ACP] + CoA = holo-[ACP] + adenosine 3',5'-bisphosphate + H(+). Functionally, transfers the 4'-phosphopantetheine moiety from coenzyme A to a Ser of acyl-carrier-protein. In Borreliella burgdorferi (strain ATCC 35210 / DSM 4680 / CIP 102532 / B31) (Borrelia burgdorferi), this protein is Holo-[acyl-carrier-protein] synthase.